A 90-amino-acid chain; its full sequence is Small ribosomal subunit protein uS15 (90 aa).

Belongs to the universal ribosomal protein uS15 family. Part of the 30S ribosomal subunit. Forms a bridge to the 50S subunit in the 70S ribosome, contacting the 23S rRNA.

Functionally, one of the primary rRNA binding proteins, it binds directly to 16S rRNA where it helps nucleate assembly of the platform of the 30S subunit by binding and bridging several RNA helices of the 16S rRNA. In terms of biological role, forms an intersubunit bridge (bridge B4) with the 23S rRNA of the 50S subunit in the ribosome. The protein is Small ribosomal subunit protein uS15 of Herpetosiphon aurantiacus (strain ATCC 23779 / DSM 785 / 114-95).